The sequence spans 376 residues: Nuclear hormone receptor family member nhr-124 (376 aa).

Positions 11–89 (PNICAICHQK…LGMRYHNSSE (79 aa)) form a DNA-binding region, nuclear receptor. NR C4-type zinc fingers lie at residues 14 to 34 (CAIC…CNAC) and 50 to 72 (CKKG…CRSC). The region spanning 125–371 (HLHALNETRY…FSKILTEACR (247 aa)) is the NR LBD domain.

It belongs to the nuclear hormone receptor family.

The protein resides in the nucleus. Functionally, orphan nuclear receptor. In Caenorhabditis elegans, this protein is Nuclear hormone receptor family member nhr-124 (nhr-124).